The following is a 213-amino-acid chain: Uridine kinase (213 aa).

14-21 provides a ligand contact to ATP; that stretch reads GASASGKS.

The protein belongs to the uridine kinase family.

The protein resides in the cytoplasm. It catalyses the reaction uridine + ATP = UMP + ADP + H(+). The catalysed reaction is cytidine + ATP = CMP + ADP + H(+). Its pathway is pyrimidine metabolism; CTP biosynthesis via salvage pathway; CTP from cytidine: step 1/3. It functions in the pathway pyrimidine metabolism; UMP biosynthesis via salvage pathway; UMP from uridine: step 1/1. In Vibrio vulnificus (strain CMCP6), this protein is Uridine kinase.